Consider the following 259-residue polypeptide: (3R)-3-hydroxyacyl-CoA dehydrogenase (259 aa).

Residues 13-21 (LVTGAGSGI) and 40-41 (DL) contribute to the NAD(+) site. The residue at position 58 (S58) is a Phosphoserine. Position 66 is an N6-acetyllysine (K66). NAD(+) is bound at residue 72 to 74 (ADV). S154 contacts substrate. An N6-succinyllysine modification is found at K158. The active-site Proton acceptor is Y167. NAD(+) contacts are provided by residues 167-171 (YASSK) and 200-202 (IAT). An N6-succinyllysine modification is found at K171.

The protein belongs to the short-chain dehydrogenases/reductases (SDR) family. As to quaternary structure, heterotetramer with CBR4; contains two molecules of HSD17B8 and CBR4. As to expression, kidney, liver, testis, ovary and spleen. Oviduct, uterus, mammary gland, vagina, prostate, clitoral gland and moderately heart, dorsal skin, brain and lung.

It localises to the mitochondrion matrix. It carries out the reaction a (3R)-3-hydroxyacyl-CoA + NAD(+) = a 3-oxoacyl-CoA + NADH + H(+). The catalysed reaction is 17beta-estradiol + NAD(+) = estrone + NADH + H(+). The enzyme catalyses testosterone + NAD(+) = androst-4-ene-3,17-dione + NADH + H(+). It catalyses the reaction 17beta-hydroxy-5alpha-androstan-3-one + NAD(+) = 5alpha-androstan-3,17-dione + NADH + H(+). It participates in lipid metabolism; fatty acid biosynthesis. The protein operates within steroid biosynthesis; estrogen biosynthesis. Its pathway is lipid metabolism; mitochondrial fatty acid beta-oxidation. Functionally, required for the solubility and assembly of the heterotetramer 3-ketoacyl-[acyl carrier protein] (ACP) reductase functional complex (KAR or KAR1) that forms part of the mitochondrial fatty acid synthase (mtFAS). Alpha-subunit of the KAR complex, acts as scaffold protein, required for the stability of carbonyl reductase type-4 (CBR4, beta-subunit of the KAR complex) and for its 3-ketoacyl-ACP reductase activity, thereby participating in mitochondrial fatty acid biosynthesis. Catalyzes the NAD-dependent conversion of (3R)-3-hydroxyacyl-CoA into 3-ketoacyl-CoA (3-oxoacyl-CoA) with no chain length preference, this enzymatic activity is not needed for the KAR function. Prefers (3R)-3-hydroxyacyl-CoA over (3S)-3-hydroxyacyl-CoA and displays enzymatic activity only in the presence of NAD(+)(H). Cooperates with enoyl-CoA hydratase 1 in mitochondria, together they constitute an alternative route to the auxiliary enzyme pathways for the breakdown of Z-PUFA (cis polyunsaturated fatty acid) enoyl-esters. NAD-dependent 17-beta-hydroxysteroid dehydrogenase with highest activity towards estradiol. It efficiently catalyzes the oxidation of estradiol (E2), testosterone, and dihydrotestosterone. Primarily an oxidative enzyme, it can switch to a reductive mode determined in the appropriate physiologic milieu and catalyze the reduction of estrone (E1) to form biologically active estradiol (E2). This is (3R)-3-hydroxyacyl-CoA dehydrogenase (Hsd17b8) from Mus musculus (Mouse).